The primary structure comprises 345 residues: MSKNKLSKGQERRVQANHQRRLQQRERGAAHWDDQPLGEAQEGVVVSRFGMHADVEDAAGRIYRCNLRRTLKSLVTGDKVVWRAGSEQPSGVSGIVEAVHPRRSVLTRPDVYDGVKPIAANMDQIVIVSALLPELSLNIIDRYLVACETVEVEPLIVLNKIDLLTPASRTEVEQLMAIYRRIGYRVLMVSSQTGEGMDPFREALTGRTSIFTGQSGVGKSSLLNALLPPEHEKILVNNVSDNSGLGQHTTTTARLYHFSHGGHLIDSPGVRELGLWHLAPERIARGFIEFREYLGTCKFRDCRHDTDPGCAIRGAVESGTIAHERFDNYHRIFDSMAQVNARKSF.

The disordered stretch occupies residues 1–36 (MSKNKLSKGQERRVQANHQRRLQQRERGAAHWDDQP). Residues 23–34 (QQRERGAAHWDD) are compositionally biased toward basic and acidic residues. A CP-type G domain is found at 103-273 (RSVLTRPDVY…LIDSPGVREL (171 aa)). Residues 159–162 (NKID) and 213–221 (GQSGVGKSS) each bind GTP. Residues Cys-297, Cys-302, His-304, and Cys-310 each coordinate Zn(2+).

It belongs to the TRAFAC class YlqF/YawG GTPase family. RsgA subfamily. Monomer. Associates with 30S ribosomal subunit, binds 16S rRNA. It depends on Zn(2+) as a cofactor.

It is found in the cytoplasm. Its function is as follows. One of several proteins that assist in the late maturation steps of the functional core of the 30S ribosomal subunit. Helps release RbfA from mature subunits. May play a role in the assembly of ribosomal proteins into the subunit. Circularly permuted GTPase that catalyzes slow GTP hydrolysis, GTPase activity is stimulated by the 30S ribosomal subunit. This chain is Small ribosomal subunit biogenesis GTPase RsgA, found in Sodalis glossinidius (strain morsitans).